Consider the following 437-residue polypeptide: Alpha-galactosidase 3 (437 aa).

The signal sequence occupies residues 1 to 30; it reads MVIMKKMKDSVLFLVVGLFSLSVLVSQSIA. 2 cysteine pairs are disulfide-bonded: Cys-85–Cys-117 and Cys-165–Cys-195. Asn-88 carries an N-linked (GlcNAc...) asparagine glycan. Residues 115-116 and Lys-191 each bind substrate; that span reads DD. The Nucleophile role is filled by Asp-193. Residue Asn-214 is glycosylated (N-linked (GlcNAc...) asparagine). Substrate contacts are provided by residues 226–230, Arg-244, and Asp-248; that span reads EWGVD. Asp-248 (proton donor) is an active-site residue. Asn-250, Asn-315, and Asn-408 each carry an N-linked (GlcNAc...) asparagine glycan.

Belongs to the glycosyl hydrolase 27 family. As to quaternary structure, homodimer.

It is found in the secreted. The protein localises to the cell wall. The protein resides in the extracellular space. Its subcellular location is the apoplast. It localises to the vacuole. The enzyme catalyses Hydrolysis of terminal, non-reducing alpha-D-galactose residues in alpha-D-galactosides, including galactose oligosaccharides, galactomannans and galactolipids.. May regulate leaf (and possibly other organ) development by functioning in cell wall loosening and cell wall expansion. The chain is Alpha-galactosidase 3 from Arabidopsis thaliana (Mouse-ear cress).